Consider the following 251-residue polypeptide: uncharacterized protein (251 aa).

5 consecutive transmembrane segments (helical) span residues 22-42, 86-106, 120-140, 157-177, and 205-225; these read FLGVIPLFFICFVFVIADIVI, FFLSAFAYIIFTFLGYNVILA, LASSVFLHVLAPIAFLVAGIV, LGYFMIYPLVYGLYLATIPYV, and IVAWPVVICFLFIYFPLSFLA.

The protein resides in the cell membrane. This is an uncharacterized protein from Mycoplasma pneumoniae (strain ATCC 29342 / M129 / Subtype 1) (Mycoplasmoides pneumoniae).